Consider the following 411-residue polypeptide: Acetyl-coenzyme A carboxylase carboxyl transferase subunit beta, chloroplastic (411 aa).

Positions 32 to 302 constitute a CoA carboxyltransferase N-terminal domain; the sequence is LWTRCDHCGV…KEQGRIPYGE (271 aa). Positions 36, 39, 55, and 58 each coordinate Zn(2+). Residues 36-58 form a C4-type zinc finger; sequence CDHCGVILYIKHLKENQRVCFGC.

It belongs to the AccD/PCCB family. As to quaternary structure, acetyl-CoA carboxylase is a heterohexamer composed of biotin carboxyl carrier protein, biotin carboxylase and 2 subunits each of ACCase subunit alpha and ACCase plastid-coded subunit beta (accD). Zn(2+) is required as a cofactor.

It is found in the plastid. Its subcellular location is the chloroplast stroma. It catalyses the reaction N(6)-carboxybiotinyl-L-lysyl-[protein] + acetyl-CoA = N(6)-biotinyl-L-lysyl-[protein] + malonyl-CoA. The protein operates within lipid metabolism; malonyl-CoA biosynthesis; malonyl-CoA from acetyl-CoA: step 1/1. Component of the acetyl coenzyme A carboxylase (ACC) complex. Biotin carboxylase (BC) catalyzes the carboxylation of biotin on its carrier protein (BCCP) and then the CO(2) group is transferred by the transcarboxylase to acetyl-CoA to form malonyl-CoA. The sequence is that of Acetyl-coenzyme A carboxylase carboxyl transferase subunit beta, chloroplastic from Chlorella vulgaris (Green alga).